We begin with the raw amino-acid sequence, 89 residues long: DNA/RNA-binding protein Alba 1 (89 aa).

This sequence belongs to the histone-like Alba family.

It localises to the cytoplasm. It is found in the chromosome. Binds double-stranded DNA tightly but without sequence specificity. Involved in DNA compaction. The protein is DNA/RNA-binding protein Alba 1 of Archaeoglobus fulgidus (strain ATCC 49558 / DSM 4304 / JCM 9628 / NBRC 100126 / VC-16).